A 311-amino-acid chain; its full sequence is 4-hydroxy-3-methylbut-2-enyl diphosphate reductase (311 aa).

Position 12 (Cys-12) interacts with [4Fe-4S] cluster. His-41 and His-74 together coordinate (2E)-4-hydroxy-3-methylbut-2-enyl diphosphate. Dimethylallyl diphosphate contacts are provided by His-41 and His-74. Residues His-41 and His-74 each coordinate isopentenyl diphosphate. A [4Fe-4S] cluster-binding site is contributed by Cys-96. A (2E)-4-hydroxy-3-methylbut-2-enyl diphosphate-binding site is contributed by His-124. His-124 serves as a coordination point for dimethylallyl diphosphate. His-124 contributes to the isopentenyl diphosphate binding site. Glu-126 functions as the Proton donor in the catalytic mechanism. Thr-168 contacts (2E)-4-hydroxy-3-methylbut-2-enyl diphosphate. Residue Cys-198 participates in [4Fe-4S] cluster binding. Residues Ser-226, Ser-227, Asn-228, and Ser-270 each contribute to the (2E)-4-hydroxy-3-methylbut-2-enyl diphosphate site. Residues Ser-226, Ser-227, Asn-228, and Ser-270 each contribute to the dimethylallyl diphosphate site. Residues Ser-226, Ser-227, Asn-228, and Ser-270 each contribute to the isopentenyl diphosphate site.

Belongs to the IspH family. Requires [4Fe-4S] cluster as cofactor.

It carries out the reaction isopentenyl diphosphate + 2 oxidized [2Fe-2S]-[ferredoxin] + H2O = (2E)-4-hydroxy-3-methylbut-2-enyl diphosphate + 2 reduced [2Fe-2S]-[ferredoxin] + 2 H(+). The catalysed reaction is dimethylallyl diphosphate + 2 oxidized [2Fe-2S]-[ferredoxin] + H2O = (2E)-4-hydroxy-3-methylbut-2-enyl diphosphate + 2 reduced [2Fe-2S]-[ferredoxin] + 2 H(+). The protein operates within isoprenoid biosynthesis; dimethylallyl diphosphate biosynthesis; dimethylallyl diphosphate from (2E)-4-hydroxy-3-methylbutenyl diphosphate: step 1/1. It functions in the pathway isoprenoid biosynthesis; isopentenyl diphosphate biosynthesis via DXP pathway; isopentenyl diphosphate from 1-deoxy-D-xylulose 5-phosphate: step 6/6. Functionally, catalyzes the conversion of 1-hydroxy-2-methyl-2-(E)-butenyl 4-diphosphate (HMBPP) into a mixture of isopentenyl diphosphate (IPP) and dimethylallyl diphosphate (DMAPP). Acts in the terminal step of the DOXP/MEP pathway for isoprenoid precursor biosynthesis. The protein is 4-hydroxy-3-methylbut-2-enyl diphosphate reductase of Saccharophagus degradans (strain 2-40 / ATCC 43961 / DSM 17024).